The following is a 556-amino-acid chain: Genetic interactor of prohibitins 3, mitochondrial (556 aa).

A mitochondrion-targeting transit peptide spans 1 to 21 (MLNLCHALRGVRQFSCSVIVK). Residues 113-305 (ESTLNDILNY…LFDLPGYSTS (193 aa)) form the CP-type G domain.

It belongs to the TRAFAC class YlqF/YawG GTPase family. GEP3 subfamily.

It localises to the mitochondrion. Functionally, interacts genetically with prohibitins and thus may be involved in the mitochondrial lipid metabolism. This is Genetic interactor of prohibitins 3, mitochondrial (GEP3) from Saccharomyces cerevisiae (strain YJM789) (Baker's yeast).